A 306-amino-acid chain; its full sequence is MGERLLESKKDHQHGEILTQVPDDMLKKKTPRVKSCGEVSVGHASLNRHHRADTGHKPYEYQEYGQKPYKCTYCKKAFSDLPYFRTHEWAHTGGKPYDCEECGKSFISRSSIRRHRIMHSGDGPYKCNFCGKALMCLSLYLIHKRTHTGEKPYECKQCGKAFSHSGSLRIHERTHTGEKPYECSECGKAFHSSTCLHAHKITHTGEKPYECKQCGKAFVSFNSVRYHERTHTGEKPYECKQCGKAFRSASHLRTHGRTHTGEKPYECKQCGKAFGCASSVKIHERTHTGEKPCSSNTSKGQGEKIA.

The segment at 31–53 (PRVKSCGEVSVGHASLNRHHRAD) adopts a C2H2-type 1; degenerate zinc-finger fold. 8 C2H2-type zinc fingers span residues 69–91 (YKCT…EWAH), 97–119 (YDCE…RIMH), 125–147 (YKCN…KRTH), 153–175 (YECK…ERTH), 181–203 (YECS…KITH), 209–231 (YECK…ERTH), 237–259 (YECK…GRTH), and 265–287 (YECK…ERTH). Tyr-209 is subject to Phosphotyrosine. Positions 287 to 306 (HTGEKPCSSNTSKGQGEKIA) are disordered.

The protein belongs to the krueppel C2H2-type zinc-finger protein family.

It is found in the nucleus. Functionally, may be involved in transcriptional regulation. In Homo sapiens (Human), this protein is Zinc finger protein 625 (ZNF625).